Here is a 341-residue protein sequence, read N- to C-terminus: S-adenosylmethionine:tRNA ribosyltransferase-isomerase (341 aa).

The protein belongs to the QueA family. As to quaternary structure, monomer.

The protein resides in the cytoplasm. The enzyme catalyses 7-aminomethyl-7-carbaguanosine(34) in tRNA + S-adenosyl-L-methionine = epoxyqueuosine(34) in tRNA + adenine + L-methionine + 2 H(+). Its pathway is tRNA modification; tRNA-queuosine biosynthesis. Functionally, transfers and isomerizes the ribose moiety from AdoMet to the 7-aminomethyl group of 7-deazaguanine (preQ1-tRNA) to give epoxyqueuosine (oQ-tRNA). The chain is S-adenosylmethionine:tRNA ribosyltransferase-isomerase from Citrifermentans bemidjiense (strain ATCC BAA-1014 / DSM 16622 / JCM 12645 / Bem) (Geobacter bemidjiensis).